The chain runs to 192 residues: Anthrone oxygenase (192 aa).

3 consecutive transmembrane segments (helical) span residues 12 to 32, 54 to 74, and 86 to 106; these read IVTG…TVPV, GHIS…YIAA, and AALV…VMSS. N-linked (GlcNAc...) asparagine glycans are attached at residues N130, N138, and N147. A helical membrane pass occupies residues 172–192; the sequence is MHLVRSLFPLMAAVLGVGICV.

The protein belongs to the anthrone oxygenase family.

Its subcellular location is the membrane. It carries out the reaction emodin anthrone + O2 = emodin + H2O + H(+). Its pathway is secondary metabolite biosynthesis. Anthrone oxygenase; part of the gene cluster that mediates the biosynthesis of monodictyphenone, a prenyl xanthone derivative. The pathway begins with the synthesis of atrochrysone thioester by the polyketide synthase (PKS) mdpG. The atrochrysone carboxyl ACP thioesterase mdpF then breaks the thioester bond and releases the atrochrysone carboxylic acid from mdpG. The atrochrysone carboxylic acid is then converted to atrochrysone which is further transformed into emodin anthrone by mdpH-1 and mdpH-2. Emodin is further modified to yield monodictyphenone via several steps involving mdpB, mdpC mdpJ, mdpK and mdpL. These enzymes with xptA, xptB and xptC are also proposed to be involved in the synthesis of shamixanthone from emodin. Especially, direct reduction of emodin by the short chain dehydrogenase mdpC followed by dehydration catalyzed by the scytalone dehydratase-like protein mdpB gives loss of oxygen and formation of chrysophanol intermediate in two simple steps. This is Anthrone oxygenase from Emericella nidulans (strain FGSC A4 / ATCC 38163 / CBS 112.46 / NRRL 194 / M139) (Aspergillus nidulans).